We begin with the raw amino-acid sequence, 251 residues long: CDP-diacylglycerol pyrophosphatase (251 aa).

The helical transmembrane segment at 4–24 (AGLLFLVMIVIAVVAAGIGYW) threads the bilayer.

The protein belongs to the Cdh family.

It is found in the cell inner membrane. The catalysed reaction is a CDP-1,2-diacyl-sn-glycerol + H2O = a 1,2-diacyl-sn-glycero-3-phosphate + CMP + 2 H(+). It participates in phospholipid metabolism; CDP-diacylglycerol degradation; phosphatidate from CDP-diacylglycerol: step 1/1. The sequence is that of CDP-diacylglycerol pyrophosphatase from Shigella boydii serotype 4 (strain Sb227).